The sequence spans 31 residues: MPTITSYFGFLLAALTITSALLIGLSKIRLI.

The helical transmembrane segment at 4–24 (ITSYFGFLLAALTITSALLIG) threads the bilayer.

Belongs to the PetL family. The 4 large subunits of the cytochrome b6-f complex are cytochrome b6, subunit IV (17 kDa polypeptide, PetD), cytochrome f and the Rieske protein, while the 4 small subunits are PetG, PetL, PetM and PetN. The complex functions as a dimer.

The protein localises to the plastid. It localises to the chloroplast thylakoid membrane. Its function is as follows. Component of the cytochrome b6-f complex, which mediates electron transfer between photosystem II (PSII) and photosystem I (PSI), cyclic electron flow around PSI, and state transitions. PetL is important for photoautotrophic growth as well as for electron transfer efficiency and stability of the cytochrome b6-f complex. This Piper cenocladum (Ant piper) protein is Cytochrome b6-f complex subunit 6.